Consider the following 336-residue polypeptide: Holliday junction branch migration complex subunit RuvB (336 aa).

A large ATPase domain (RuvB-L) region spans residues 4-184 (ADRLVAPGSI…FGIVQRLEFY (181 aa)). ATP is bound by residues isoleucine 23, arginine 24, glycine 65, lysine 68, threonine 69, threonine 70, 131–133 (EDY), arginine 174, tyrosine 184, and arginine 221. Position 69 (threonine 69) interacts with Mg(2+). The segment at 185–255 (QVADLQHIVS…VASQALDMLN (71 aa)) is small ATPAse domain (RuvB-S). The head domain (RuvB-H) stretch occupies residues 258–336 (AEGFDYMDRK…HFGITPPQMP (79 aa)). DNA contacts are provided by arginine 294, arginine 313, and arginine 318.

This sequence belongs to the RuvB family. Homohexamer. Forms an RuvA(8)-RuvB(12)-Holliday junction (HJ) complex. HJ DNA is sandwiched between 2 RuvA tetramers; dsDNA enters through RuvA and exits via RuvB. An RuvB hexamer assembles on each DNA strand where it exits the tetramer. Each RuvB hexamer is contacted by two RuvA subunits (via domain III) on 2 adjacent RuvB subunits; this complex drives branch migration. In the full resolvosome a probable DNA-RuvA(4)-RuvB(12)-RuvC(2) complex forms which resolves the HJ.

The protein resides in the cytoplasm. It catalyses the reaction ATP + H2O = ADP + phosphate + H(+). Its function is as follows. The RuvA-RuvB-RuvC complex processes Holliday junction (HJ) DNA during genetic recombination and DNA repair, while the RuvA-RuvB complex plays an important role in the rescue of blocked DNA replication forks via replication fork reversal (RFR). RuvA specifically binds to HJ cruciform DNA, conferring on it an open structure. The RuvB hexamer acts as an ATP-dependent pump, pulling dsDNA into and through the RuvAB complex. RuvB forms 2 homohexamers on either side of HJ DNA bound by 1 or 2 RuvA tetramers; 4 subunits per hexamer contact DNA at a time. Coordinated motions by a converter formed by DNA-disengaged RuvB subunits stimulates ATP hydrolysis and nucleotide exchange. Immobilization of the converter enables RuvB to convert the ATP-contained energy into a lever motion, pulling 2 nucleotides of DNA out of the RuvA tetramer per ATP hydrolyzed, thus driving DNA branch migration. The RuvB motors rotate together with the DNA substrate, which together with the progressing nucleotide cycle form the mechanistic basis for DNA recombination by continuous HJ branch migration. Branch migration allows RuvC to scan DNA until it finds its consensus sequence, where it cleaves and resolves cruciform DNA. The polypeptide is Holliday junction branch migration complex subunit RuvB (Cronobacter sakazakii (strain ATCC BAA-894) (Enterobacter sakazakii)).